The chain runs to 250 residues: Ubiquinone/menaquinone biosynthesis C-methyltransferase UbiE (250 aa).

S-adenosyl-L-methionine contacts are provided by residues Ser73, Asp94, and 122–123; that span reads NA.

This sequence belongs to the class I-like SAM-binding methyltransferase superfamily. MenG/UbiE family.

It catalyses the reaction a 2-demethylmenaquinol + S-adenosyl-L-methionine = a menaquinol + S-adenosyl-L-homocysteine + H(+). The enzyme catalyses a 2-methoxy-6-(all-trans-polyprenyl)benzene-1,4-diol + S-adenosyl-L-methionine = a 5-methoxy-2-methyl-3-(all-trans-polyprenyl)benzene-1,4-diol + S-adenosyl-L-homocysteine + H(+). It participates in quinol/quinone metabolism; menaquinone biosynthesis; menaquinol from 1,4-dihydroxy-2-naphthoate: step 2/2. The protein operates within cofactor biosynthesis; ubiquinone biosynthesis. Its function is as follows. Methyltransferase required for the conversion of demethylmenaquinol (DMKH2) to menaquinol (MKH2) and the conversion of 2-polyprenyl-6-methoxy-1,4-benzoquinol (DDMQH2) to 2-polyprenyl-3-methyl-6-methoxy-1,4-benzoquinol (DMQH2). This is Ubiquinone/menaquinone biosynthesis C-methyltransferase UbiE from Legionella pneumophila subsp. pneumophila (strain Philadelphia 1 / ATCC 33152 / DSM 7513).